Consider the following 184-residue polypeptide: Putative manganese efflux pump MntP (184 aa).

5 helical membrane passes run 39–59, 65–85, 102–122, 132–152, and 161–181; these read IFGV…LSFV, IDHF…ILEA, LALG…TFSF, LIIG…GKIL, and LVLG…THLV.

Belongs to the MntP (TC 9.B.29) family.

Its subcellular location is the cell inner membrane. Functionally, probably functions as a manganese efflux pump. This is Putative manganese efflux pump MntP from Campylobacter curvus (strain 525.92).